We begin with the raw amino-acid sequence, 129 residues long: uncharacterized protein (129 aa).

2 disordered regions span residues 1-57 (MGGG…LPNH) and 87-129 (PVSS…WLWW). Residues 10–20 (SGEERREKRSG) show a composition bias toward basic and acidic residues. The span at 87-99 (PVSSSPSRSPSSS) shows a compositional bias: low complexity.

This is an uncharacterized protein from Homo sapiens (Human).